Reading from the N-terminus, the 451-residue chain is MFNNLTQRLSDSLKKILNKGRLTEENIKETIREVRKALLEADVALSVIKKFIENVKKKSIGHEINKSLTPGQEFIKIVKHELIFAMGEKNHSLNFSIEPPAVILVVGLQGSGKTTSLAKLGKWIKNKYKKKILITSTDTYRAAAIEQLKILSDQIEIDFFESDKHHTPIEITKNAIKYAKLKLYDVLLIDTAGRLHIDKKMMNEIQQIQVISKAIETLLIVDSMMGQDAINMAKIFNNDLLISGIILTKTDGDSRSGIALSMRYITGKPIKFIGTGEKIISLEPFHPERIADRILGMNDIMSLIEDIEEKVDQSQIQKLTKKLKKGHDFNLNDFLTQIKQMKKIGGLNYFANKFSINHQLSNNISLLNTDKNTLKKIEAMICSMTPKERIKPIIIKGSRKRRIALGSGTQIQDVNKLLKNFDDIRRIMKKIKTDGIAKVIRGIKNMLPKKF.

GTP-binding positions include 107 to 114 (GLQGSGKT), 190 to 194 (DTAGR), and 248 to 251 (TKTD).

Belongs to the GTP-binding SRP family. SRP54 subfamily. In terms of assembly, part of the signal recognition particle protein translocation system, which is composed of SRP and FtsY. SRP is a ribonucleoprotein composed of Ffh and a 4.5S RNA molecule.

It localises to the cytoplasm. The enzyme catalyses GTP + H2O = GDP + phosphate + H(+). Its function is as follows. Involved in targeting and insertion of nascent membrane proteins into the cytoplasmic membrane. Binds to the hydrophobic signal sequence of the ribosome-nascent chain (RNC) as it emerges from the ribosomes. The SRP-RNC complex is then targeted to the cytoplasmic membrane where it interacts with the SRP receptor FtsY. Interaction with FtsY leads to the transfer of the RNC complex to the Sec translocase for insertion into the membrane, the hydrolysis of GTP by both Ffh and FtsY, and the dissociation of the SRP-FtsY complex into the individual components. The sequence is that of Signal recognition particle protein from Buchnera aphidicola subsp. Acyrthosiphon pisum (strain APS) (Acyrthosiphon pisum symbiotic bacterium).